A 163-amino-acid chain; its full sequence is Nucleotide-binding protein PM1656 (163 aa).

The protein belongs to the YajQ family.

Nucleotide-binding protein. The sequence is that of Nucleotide-binding protein PM1656 from Pasteurella multocida (strain Pm70).